Reading from the N-terminus, the 508-residue chain is GMP synthase [glutamine-hydrolyzing] (508 aa).

The 189-residue stretch at 1-189 folds into the Glutamine amidotransferase type-1 domain; that stretch reads MILVLDFGSQ…ALLVCGCEKT (189 aa). Cys78 acts as the Nucleophile in catalysis. Catalysis depends on residues His163 and Glu165. The GMPS ATP-PPase domain occupies 190-383; that stretch reads WGMQHFAQRE…LGVSQDFLMR (194 aa). Residue 217–223 participates in ATP binding; sequence SGGVDST.

As to quaternary structure, homodimer.

The enzyme catalyses XMP + L-glutamine + ATP + H2O = GMP + L-glutamate + AMP + diphosphate + 2 H(+). It functions in the pathway purine metabolism; GMP biosynthesis; GMP from XMP (L-Gln route): step 1/1. In terms of biological role, catalyzes the synthesis of GMP from XMP. This Helicobacter pylori (strain J99 / ATCC 700824) (Campylobacter pylori J99) protein is GMP synthase [glutamine-hydrolyzing] (guaA).